The chain runs to 359 residues: MEMAGCGEIDHSINMLPTNKKANESCSNTAPSLTVPECAICLQTCVHPVSLPCKHVFCYLCVKGASWLGKRCALCRQEIPEDFLDKPTLLSPEELKAASRGNGEYAWYYEGRNGWWQYDERTSRELEDAFSKGKKNTEMLIAGFLYVADLENMVQYRRNEHGRRRKIKRDIIDIPKKGVAGLRLDCDTNTVNLARESSADGADSGSAQTGASVQLAVPSSTRPLTSVDGQLTSPVTPSPDAGISLEDSFAHLQLSGDSIAERSHRGEGEEDHESPSSGRVPDTSVEETESDASSDSEDAPVVVAQHSLTQQRPLVPNGNQTVADQSDRSGTDRSVAGGGTMSVNVRSRRPDGQCTVTEV.

The RING-type zinc finger occupies 38–76 (CAICLQTCVHPVSLPCKHVFCYLCVKGASWLGKRCALCR). Residues Lys-86 and Lys-96 each participate in a glycyl lysine isopeptide (Lys-Gly) (interchain with G-Cter in ubiquitin) cross-link. A WWE domain is found at 93–169 (EELKAASRGN…EHGRRRKIKR (77 aa)). Residues Tyr-109, Arg-112, and Trp-116 each contribute to the a glycoprotein site. Residue Lys-132 forms a Glycyl lysine isopeptide (Lys-Gly) (interchain with G-Cter in ubiquitin) linkage. Residues Tyr-146, Gln-155, Arg-165, and Lys-177 each contribute to the a glycoprotein site. Lys-177 is covalently cross-linked (Glycyl lysine isopeptide (Lys-Gly) (interchain with G-Cter in ubiquitin)). 2 disordered regions span residues 197–243 (SSAD…DAGI) and 261–359 (ERSH…VTEV). Positions 199–212 (ADGADSGSAQTGAS) are enriched in low complexity. Residues 217–235 (VPSSTRPLTSVDGQLTSPV) are compositionally biased toward polar residues. Acidic residues predominate over residues 284 to 298 (SVEETESDASSDSED). Phosphoserine occurs at positions 290 and 294. Positions 306 to 324 (HSLTQQRPLVPNGNQTVAD) are enriched in polar residues.

In terms of assembly, can form homooligomers. Interacts with PARsylated AXIN1, AXIN2, BLZF1, CASC3, H1-2, IPO7, LIG3, NCL, PARP1, XRCC1, XRCC5 and XRCC6. Interacts with DDB1, DHX15, IQGAP1, LRPPRC, PARP2, PRKDC, RUVBL2, TNKS1 and TNKS2. Binding often leads to interactor ubiquitination, in the presence of the appropriate E1 and E2 enzymes, and proteasomal degradation. Post-translationally, ubiquitinated; autoubiquitinated. Autoubiquitination is enhanced upon PAR-binding. In terms of tissue distribution, expressed at relatively high levels in the brain. Also present in spleen, heart, kidney, testis and liver. In the brain, expressed in the cerebellum, hippocampus, striatum, cortex, frontal cortex and, at lowest levels, in olfactory bulb (at protein level). Predominantly expressed in neurons.

The protein localises to the cytoplasm. It localises to the cytosol. It is found in the nucleus. It catalyses the reaction S-ubiquitinyl-[E2 ubiquitin-conjugating enzyme]-L-cysteine + [acceptor protein]-L-lysine = [E2 ubiquitin-conjugating enzyme]-L-cysteine + N(6)-ubiquitinyl-[acceptor protein]-L-lysine.. The protein operates within protein modification; protein ubiquitination. Its function is as follows. E3 ubiquitin-protein ligase that specifically binds poly-ADP-ribosylated (PARsylated) proteins and mediates their ubiquitination and subsequent degradation. May regulate many important biological processes, such as cell survival and DNA damage response. Acts as an activator of the Wnt signaling pathway by mediating the ubiquitination of PARsylated AXIN1 and AXIN2, 2 key components of the beta-catenin destruction complex. Acts in cooperation with tankyrase proteins (TNKS and TNKS2), which mediate PARsylation of target proteins AXIN1, AXIN2, BLZF1, CASC3, TNKS and TNKS2. Recognizes and binds tankyrase-dependent PARsylated proteins via its WWE domain and mediates their ubiquitination, leading to their degradation. Different ubiquitin linkage types have been observed: TNKS2 undergoes ubiquitination at 'Lys-48' and 'Lys-63', while AXIN1 is only ubiquitinated at 'Lys-48'. May regulate TNKS and TNKS2 subcellular location, preventing aggregation at a centrosomal location. Neuroprotective protein. Protects the brain against N-methyl-D-aspartate (NMDA) receptor-mediated glutamate excitotoxicity and ischemia, by interfering with PAR-induced cell death, called parthanatos. Prevents nuclear translocation of AIFM1 in a PAR-binding dependent manner. Does not affect PARP1 activation. Protects against cell death induced by DNA damaging agents, such as N-methyl-N-nitro-N-nitrosoguanidine (MNNG) and rescues cells from G1 arrest. Promotes cell survival after gamma-irradiation. Facilitates DNA repair. This chain is E3 ubiquitin-protein ligase RNF146 (Rnf146), found in Mus musculus (Mouse).